The following is a 228-amino-acid chain: Ribonuclease HII (228 aa).

Residues 11–202 (GPVAGVDEAG…VVAAAQLHGM (192 aa)) enclose the RNase H type-2 domain. Asp-17, Glu-18, and Asp-111 together coordinate a divalent metal cation.

It belongs to the RNase HII family. Mn(2+) is required as a cofactor. Mg(2+) serves as cofactor.

The protein resides in the cytoplasm. It carries out the reaction Endonucleolytic cleavage to 5'-phosphomonoester.. Its function is as follows. Endonuclease that specifically degrades the RNA of RNA-DNA hybrids. The chain is Ribonuclease HII from Saccharopolyspora erythraea (strain ATCC 11635 / DSM 40517 / JCM 4748 / NBRC 13426 / NCIMB 8594 / NRRL 2338).